We begin with the raw amino-acid sequence, 277 residues long: Thymidylate synthase (277 aa).

DUMP is bound at residue R21. Residue H51 participates in (6R)-5,10-methylene-5,6,7,8-tetrahydrofolate binding. A dUMP-binding site is contributed by 126–127 (RR). C159 serves as the catalytic Nucleophile. DUMP is bound by residues 179 to 182 (RSAD), N190, and 220 to 222 (HLY). D182 contributes to the (6R)-5,10-methylene-5,6,7,8-tetrahydrofolate binding site. S276 provides a ligand contact to (6R)-5,10-methylene-5,6,7,8-tetrahydrofolate.

This sequence belongs to the thymidylate synthase family. Bacterial-type ThyA subfamily. Homodimer.

The protein resides in the cytoplasm. The catalysed reaction is dUMP + (6R)-5,10-methylene-5,6,7,8-tetrahydrofolate = 7,8-dihydrofolate + dTMP. Its pathway is pyrimidine metabolism; dTTP biosynthesis. In terms of biological role, catalyzes the reductive methylation of 2'-deoxyuridine-5'-monophosphate (dUMP) to 2'-deoxythymidine-5'-monophosphate (dTMP) while utilizing 5,10-methylenetetrahydrofolate (mTHF) as the methyl donor and reductant in the reaction, yielding dihydrofolate (DHF) as a by-product. This enzymatic reaction provides an intracellular de novo source of dTMP, an essential precursor for DNA biosynthesis. This Saccharophagus degradans (strain 2-40 / ATCC 43961 / DSM 17024) protein is Thymidylate synthase.